Here is a 230-residue protein sequence, read N- to C-terminus: UPF0502 protein Patl_1161 (230 aa).

It belongs to the UPF0502 family.

In Pseudoalteromonas atlantica (strain T6c / ATCC BAA-1087), this protein is UPF0502 protein Patl_1161.